We begin with the raw amino-acid sequence, 314 residues long: Vacuolar membrane protein FOSTERSB_4073 (314 aa).

The tract at residues Lys32–Ala60 is disordered. Residues Val93–Leu113 form a helical membrane-spanning segment. Phosphoserine is present on residues Ser148, Ser254, and Ser274. The disordered stretch occupies residues Glu240–Asn309. Residues Ser254–His269 show a composition bias toward basic and acidic residues.

Belongs to the PRM5 family.

The protein localises to the vacuole membrane. The sequence is that of Vacuolar membrane protein FOSTERSB_4073 from Saccharomyces cerevisiae (strain FostersB) (Baker's yeast).